Consider the following 834-residue polypeptide: Transcription intermediary factor 1-beta (834 aa).

Alanine 2 carries the N-acetylalanine modification. Over residues 13–23 (AATAASAASGS) the composition is skewed to low complexity. The interval 13–56 (AATAASAASGSPGSGEGSAGGEKRPAASSAAAASAAASSPAGGG) is disordered. Phosphoserine occurs at positions 23, 26, and 30. Lysine 35 is covalently cross-linked (Glycyl lysine isopeptide (Lys-Gly) (interchain with G-Cter in SUMO2)). A compositionally biased stretch (low complexity) spans 38 to 52 (AASSAAAASAAASSP). Serine 51 carries the post-translational modification Phosphoserine. Residues 66-122 (CGVCRERLRPERDPRLLPCLHSACSACLGPATPAAANNSGDGGSAGDGAMVDCPVCK) form an RING-type zinc finger. A Glycyl lysine isopeptide (Lys-Gly) (interchain with G-Cter in SUMO2) cross-link involves residue lysine 128. Serine 139 is modified (phosphoserine). The B box-type 1 zinc finger occupies 149-196 (DANQCCTSCEDNAPATSYCVECSEPLCETCVEAHQRVKYTKDHTVRST). Residues cysteine 154, cysteine 157, cysteine 178, and histidine 182 each contribute to the Zn(2+) site. Lysine 200 is covalently cross-linked (Glycyl lysine isopeptide (Lys-Gly) (interchain with G-Cter in SUMO2)). Residues 205–246 (ERTVYCNVHKHEPLVLFCESCDTLTCRDCQLNAHKDHQYQFL) form a B box-type 2 zinc finger. Positions 210, 213, 233, and 238 each coordinate Zn(2+). The tract at residues 247–377 (EDAVRNQRKL…LIYFQLHRAL (131 aa)) is leucine zipper alpha helical coiled-coil region. The interval 248-377 (DAVRNQRKLL…LIYFQLHRAL (130 aa)) is interaction with MAGEC2. Residues lysine 255 and lysine 262 each participate in a glycyl lysine isopeptide (Lys-Gly) (interchain with G-Cter in SUMO2) cross-link. At lysine 267 the chain carries N6-acetyllysine. Lysine 273 participates in a covalent cross-link: Glycyl lysine isopeptide (Lys-Gly) (interchain with G-Cter in SUMO2). Lysine 305 carries the post-translational modification N6-acetyllysine; alternate. Residue lysine 305 forms a Glycyl lysine isopeptide (Lys-Gly) (interchain with G-Cter in SUMO2); alternate linkage. Residue lysine 320 forms a Glycyl lysine isopeptide (Lys-Gly) (interchain with G-Cter in SUMO2) linkage. The residue at position 341 (lysine 341) is an N6-acetyllysine. Lysine 367 is covalently cross-linked (Glycyl lysine isopeptide (Lys-Gly) (interchain with G-Cter in SUMO2)). Residues 367–371 (KLIYF) are involved in binding PPP1CA. N6-acetyllysine; alternate is present on lysine 378. Residue lysine 378 forms a Glycyl lysine isopeptide (Lys-Gly) (interchain with G-Cter in SUMO2); alternate linkage. Lysine 378 participates in a covalent cross-link: Glycyl lysine isopeptide (Lys-Gly) (interchain with G-Cter in SUMO1); alternate. Lysine 408 participates in a covalent cross-link: Glycyl lysine isopeptide (Lys-Gly) (interchain with G-Cter in SUMO2). The disordered stretch occupies residues 412–480 (ERPGTNSTGP…SRSGEGEVSG (69 aa)). Serine 418 is modified (phosphoserine). A Glycyl lysine isopeptide (Lys-Gly) (interchain with G-Cter in SUMO2) cross-link involves residue lysine 435. Over residues 435–444 (KQGSGSSQPM) the composition is skewed to polar residues. A phosphoserine mark is found at serine 438, serine 440, and serine 454. Lysine 469 is covalently cross-linked (Glycyl lysine isopeptide (Lys-Gly) (interchain with G-Cter in SUMO2); alternate). Residue lysine 469 forms a Glycyl lysine isopeptide (Lys-Gly) (interchain with G-Cter in SUMO1); alternate linkage. The residue at position 470 (arginine 470) is a Citrulline. Serine 471 is subject to Phosphoserine. At arginine 472 the chain carries Citrulline. Serine 473, serine 479, and serine 489 each carry phosphoserine. The segment at 476–513 (GEVSGLLRKVPRVSLERLDLDLTSDSQPPVFKVFPGST) is HP1 box. The short motif at 481-494 (LLRKVPRVSLERLD) is the PxVxL motif element. Threonine 498 carries the post-translational modification Phosphothreonine. Position 501 is a phosphoserine (serine 501). A Glycyl lysine isopeptide (Lys-Gly) (interchain with G-Cter in SUMO2) cross-link involves residue lysine 507. Lysine 554 participates in a covalent cross-link: Glycyl lysine isopeptide (Lys-Gly) (interchain with G-Cter in SUMO2); alternate. Lysine 554 participates in a covalent cross-link: Glycyl lysine isopeptide (Lys-Gly) (interchain with G-Cter in SUMO); alternate. A Glycyl lysine isopeptide (Lys-Gly) (interchain with G-Cter in SUMO2) cross-link involves residue lysine 575. The segment at 581-602 (LTEGPGAEGPRLASPSGSTSSG) is disordered. Position 594 is a phosphoserine (serine 594). Residues 625-672 (ATICRVCQKPGDLVMCNQCEFCFHLDCHLPALQDVPGEEWSCSLCHVL) form a PHD-type zinc finger. Lysine 676 is covalently cross-linked (Glycyl lysine isopeptide (Lys-Gly) (interchain with G-Cter in SUMO)). 3 positions are modified to phosphoserine: serine 683, serine 689, and serine 697. Residues 695–799 (KLSPANQRKC…RFFETRMNDA (105 aa)) form the Bromo domain. A Glycyl lysine isopeptide (Lys-Gly) (interchain with G-Cter in SUMO2); alternate cross-link involves residue lysine 750. Lysine 750 is covalently cross-linked (Glycyl lysine isopeptide (Lys-Gly) (interchain with G-Cter in SUMO1); alternate). Lysine 750 is covalently cross-linked (Glycyl lysine isopeptide (Lys-Gly) (interchain with G-Cter in SUMO); alternate). Serine 752 is modified (phosphoserine). At tyrosine 755 the chain carries Phosphotyrosine. Position 757 is a phosphoserine (serine 757). N6-acetyllysine; alternate occurs at positions 770, 774, and 779. Residues lysine 770, lysine 774, and lysine 779 each participate in a glycyl lysine isopeptide (Lys-Gly) (interchain with G-Cter in SUMO2); alternate cross-link. A Glycyl lysine isopeptide (Lys-Gly) (interchain with G-Cter in SUMO1); alternate cross-link involves residue lysine 779. Serine 784 carries the post-translational modification Phosphoserine. Residue lysine 804 forms a Glycyl lysine isopeptide (Lys-Gly) (interchain with G-Cter in SUMO2) linkage. Position 824 is a phosphoserine; by ATM and ATR and dsDNA kinase (serine 824).

The protein belongs to the TRIM/RBCC family. Oligomer; the RBCC domain homotrimerizes and interacts with one molecule of KRAB to form the KRAB-KAP1 corepressor complex. Interacts with SETX. Binding to a KRAB domain is an absolute requirement for silencing gene expression. Interacts with a number of KRAB-ZFP proteins including ZNF10, ZFP53, ZFP68, ZNF382 and ZNF256. Interacts with NCOR1, NR3C1 and CHD3. Interacts with CEBPB (via the RING-type and PHD-type zinc fingers). Interacts with CBX5 (via the PxVxL motif); the interaction occurs in interphase nuclei and competes for binding POGZ. Interacts with POGZ; the interaction competes for interaction with CBX5. Interacts with SETDB1; the interaction is enhanced by KAP1 sumoylation, stimulates SETDB1 histone methyltransferase activity and gene silencing. Interacts (via the PHD-type zinc finger) with UBE2I; the interaction is required for sumoylation and repressor activity. Component of the TRIM28/KAP1-ERBB4-MDM2 complex involved in connecting growth factor and DNA damage responses. Interacts directly with ERBB4; the interaction represses ERBB4-mediated transcription activity. Interacts with MDM2; the interaction contributes to p53/TP53 inactivation. Component of the TRIM28/KAP1-MDM2-p53/TP53; involved in regulating p53/TP53 stabilization and activity. Interacts (via the leucine zipper alpha helical coiled-coil) with E2F1 (central region); the interaction inhibits E2F1 acetylation and transcriptional activity. Interacts with PPP1CA; the interaction dephosphorylates TRIM28 at Ser-824 and forms a complex at the p21 promoter site. Interacts with PPP1CB; the interaction is weak but is increased on dephosphorylation at Ser-824. Interacts with CEBPB and NR3C1. Interacts with CBX5 (via the PxVxL motif); the interaction occurs in interphase nuclei and competes for binding POGZ. Component of a ternary complex that includes TRIM28, a HP1 protein (CBX1, CBX3 OR CBX5), a KRAB domain-containing protein, and DNA. Interacts with SMARCAD1. Interacts with, and sumoylates IRF7. Interacts with MAGEC2. Part of a complex composed of TRIM28, HDAC1, HDAC2 and EHMT2. Interacts (via the RBCC domain) with KOX1 (via the KRAB domain), ZNF268 (via the KRAB domain) and ZNF300 (via the KRAB domain); the interactions increase KOX1, ZNF268 and ZNF300 nuclear localization activities. Interacts with AICDA. The large PER complex involved in the histone methylation is composed of at least PER2, CBX3, TRIM28, SUV39H1 and/or SUV39H2; CBX3 mediates the formation of the complex. Interacts with NR4A3; the interactions potentiates NR4A3 activity on NurRE promoter. Interacts (unphosphorylated or phosphorylated form) with ZBTB1 (via BTB domain). Probably part of a corepressor complex containing ZNF304, TRIM28, SETDB1 and DNMT1. Interacts with ATRX. Forms a complex with ATRX, SETDB1 and ZNF274. Interacts with ZFP568; the interaction mediates ZFP568 transcriptional repression activity. Interacts with RRP1B. Interacts with CRY1. Interacts with ZNF263; recruited to the SIX3 promoter along with other proteins involved in chromatin modification and transcriptional corepression where it contributes to transcriptional repression. Interacts with CYREN (via XLF motif). Interacts with TRIM17; this interaction prevents TRIM28 activity. Interacts with ZNF746. Interacts with PHF13. Interacts with ZNF354C. Interacts with ZNF432; the interaction is independent of PARP1. Post-translationally, ATM-induced phosphorylation on Ser-824 represses sumoylation leading to the de-repression of expression of a subset of genes involved in cell cycle control and apoptosis in response to genotoxic stress. Dephosphorylation by the phosphatases, PPP1CA and PP1CB forms, allows sumoylation and expression of TRIM28 target genes. Sumoylation/desumoylation events regulate TRIM28-mediated transcriptional repression. Sumoylation is required for interaction with CHD3 and SETDB1 and the corepressor activity. Represses and is repressed by Ser-824 phosphorylation. Enhances the TRIM28 corepressor activity, inhibiting transcriptional activity of a number of genes including GADD45A and CDKN1A/p21. Lys-554, Lys-779 and Lys-804 are the major sites of sumoylation. In response to Dox-induced DNA damage, enhanced phosphorylation on Ser-824 prevents sumoylation and allows de-repression of CDKN1A/p21. In terms of processing, auto-ubiquitinated; enhanced by MAGEA2 and MAGEC2. Post-translationally, citrullinated by PADI4. ADP-ribosylated by SIRT6, promoting TRIM28/KAP1 interaction with CBX5, thereby contributing to the packaging of LINE-1 retrotransposon elements into transcriptionally repressive heterochromatin.

Its subcellular location is the nucleus. It carries out the reaction S-ubiquitinyl-[E2 ubiquitin-conjugating enzyme]-L-cysteine + [acceptor protein]-L-lysine = [E2 ubiquitin-conjugating enzyme]-L-cysteine + N(6)-ubiquitinyl-[acceptor protein]-L-lysine.. The protein operates within protein modification; protein sumoylation. In terms of biological role, nuclear corepressor for KRAB domain-containing zinc finger proteins (KRAB-ZFPs). Mediates gene silencing by recruiting CHD3, a subunit of the nucleosome remodeling and deacetylation (NuRD) complex, and SETDB1 (which specifically methylates histone H3 at 'Lys-9' (H3K9me)) to the promoter regions of KRAB target genes. Enhances transcriptional repression by coordinating the increase in H3K9me, the decrease in histone H3 'Lys-9 and 'Lys-14' acetylation (H3K9ac and H3K14ac, respectively) and the disposition of HP1 proteins to silence gene expression. Recruitment of SETDB1 induces heterochromatinization. May play a role as a coactivator for CEBPB and NR3C1 in the transcriptional activation of ORM1. Also a corepressor for ERBB4. Inhibits E2F1 activity by stimulating E2F1-HDAC1 complex formation and inhibiting E2F1 acetylation. May serve as a partial backup to prevent E2F1-mediated apoptosis in the absence of RB1. Important regulator of CDKN1A/p21(CIP1). Has E3 SUMO-protein ligase activity toward itself via its PHD-type zinc finger. Specifically sumoylates IRF7, thereby inhibiting its transactivation activity. Ubiquitinates p53/TP53 leading to its proteasomal degradation; the function is enhanced by MAGEC2 and MAGEA2, and possibly MAGEA3 and MAGEA6. Mediates the nuclear localization of KOX1, ZNF268 and ZNF300 transcription factors. Probably forms a corepressor complex required for activated KRAS-mediated promoter hypermethylation and transcriptional silencing of tumor suppressor genes (TSGs) or other tumor-related genes in colorectal cancer (CRC) cells. Required to maintain a transcriptionally repressive state of genes in undifferentiated embryonic stem cells (ESCs). In ESCs, in collaboration with SETDB1, is also required for H3K9me3 and silencing of endogenous and introduced retroviruses in a DNA-methylation independent-pathway. Associates at promoter regions of tumor suppressor genes (TSGs) leading to their gene silencing. The SETDB1-TRIM28-ZNF274 complex may play a role in recruiting ATRX to the 3'-exons of zinc-finger coding genes with atypical chromatin signatures to establish or maintain/protect H3K9me3 at these transcriptionally active regions. Acts as a corepressor for ZFP568. The protein is Transcription intermediary factor 1-beta of Mus musculus (Mouse).